The primary structure comprises 316 residues: BTB/POZ domain-containing adapter for CUL3-mediated RhoA degradation protein 2 (316 aa).

The 69-residue stretch at 28-96 (KYVQLNVGGS…LRDDTVTLPQ (69 aa)) folds into the BTB domain. Polar residues predominate over residues 268 to 279 (EATSRSRSQASP). A disordered region spans residues 268 to 287 (EATSRSRSQASPSEDEDTFE). Serine 278 bears the Phosphoserine mark. Serine 280 carries the phosphoserine; by CK2 modification.

This sequence belongs to the BACURD family. As to quaternary structure, component of the BCR(TNFAIP1) E3 ubiquitin ligase complex, at least composed of CUL3, TNFAIP1/BACURD2 and RBX1. Interacts with RHOA; with a preference for RhoA-GDP. Interacts with RHOB. Interacts with CSNK2B. Interacts with PCNA. In terms of processing, phosphorylation at Ser-280 by CK2 facilitates the nucleus localization and increases interaction with PCNA.

The protein resides in the cytoplasm. The protein localises to the nucleus. Its subcellular location is the endosome. Its pathway is protein modification; protein ubiquitination. Its function is as follows. Substrate-specific adapter of a BCR (BTB-CUL3-RBX1) E3 ubiquitin-protein ligase complex involved in regulation of cytoskeleton structure. The BCR(TNFAIP1) E3 ubiquitin ligase complex mediates the ubiquitination of RHOA, leading to its degradation by the proteasome, thereby regulating the actin cytoskeleton and cell migration. Its interaction with RHOB may regulate apoptosis. May enhance the PCNA-dependent DNA polymerase delta activity. This Rattus norvegicus (Rat) protein is BTB/POZ domain-containing adapter for CUL3-mediated RhoA degradation protein 2 (Tnfaip1).